The following is a 423-amino-acid chain: Dihydroorotase (423 aa).

Histidine 60 and histidine 62 together coordinate Zn(2+). Residues 62–64 and asparagine 94 contribute to the substrate site; that span reads HFR. Residues aspartate 152, histidine 179, histidine 232, and aspartate 305 each coordinate Zn(2+). The active site involves aspartate 305. Residues histidine 309 and 323–324 contribute to the substrate site; that span reads PG.

Belongs to the metallo-dependent hydrolases superfamily. DHOase family. Class I DHOase subfamily. Zn(2+) is required as a cofactor.

The catalysed reaction is (S)-dihydroorotate + H2O = N-carbamoyl-L-aspartate + H(+). Its pathway is pyrimidine metabolism; UMP biosynthesis via de novo pathway; (S)-dihydroorotate from bicarbonate: step 3/3. Catalyzes the reversible cyclization of carbamoyl aspartate to dihydroorotate. This is Dihydroorotase from Sulfurihydrogenibium sp. (strain YO3AOP1).